Consider the following 122-residue polypeptide: Large ribosomal subunit protein uL14 (122 aa).

This sequence belongs to the universal ribosomal protein uL14 family. In terms of assembly, part of the 50S ribosomal subunit. Forms a cluster with proteins L3 and L19. In the 70S ribosome, L14 and L19 interact and together make contacts with the 16S rRNA in bridges B5 and B8.

In terms of biological role, binds to 23S rRNA. Forms part of two intersubunit bridges in the 70S ribosome. In Paracidovorax citrulli (strain AAC00-1) (Acidovorax citrulli), this protein is Large ribosomal subunit protein uL14.